A 475-amino-acid polypeptide reads, in one-letter code: Ankyrin repeat, SAM and basic leucine zipper domain-containing protein 1 (475 aa).

The tract at residues 1 to 24 (MAASALRGPPVAGGGESSESEDDG) is disordered. Phosphoserine is present on residues serine 17, serine 18, and serine 20. ANK repeat units follow at residues 45 to 74 (EKKE…SVDS), 78 to 107 (YGWT…NASF), 110 to 144 (DKQS…DPNV), 148 to 177 (RLMT…EVNT), 181 to 210 (NGYT…NKML), and 214 to 243 (DGKM…PLEG). One can recognise an SAM domain in the interval 272–334 (SYTAFGDLEV…KILAALKELQ (63 aa)).

As to quaternary structure, interacts with DDX4, PIWIL1, RANBP9 and TDRD1.

The protein resides in the cytoplasm. Its function is as follows. Plays a central role during spermatogenesis by repressing transposable elements and preventing their mobilization, which is essential for the germline integrity. Acts via the piRNA metabolic process, which mediates the repression of transposable elements during meiosis by forming complexes composed of piRNAs and Piwi proteins and governs the methylation and subsequent repression of transposons. Its association with pi-bodies suggests a participation in the primary piRNAs metabolic process. Required prior to the pachytene stage to facilitate the production of multiple types of piRNAs, including those associated with repeats involved in the regulation of retrotransposons. May act by mediating protein-protein interactions during germ cell maturation. The sequence is that of Ankyrin repeat, SAM and basic leucine zipper domain-containing protein 1 (ASZ1) from Gorilla gorilla gorilla (Western lowland gorilla).